The sequence spans 312 residues: Homoserine O-acetyltransferase (312 aa).

Cysteine 142 acts as the Acyl-thioester intermediate in catalysis. Residues lysine 163 and serine 192 each coordinate substrate. The active-site Proton acceptor is histidine 235. The active site involves glutamate 237. Arginine 249 contributes to the substrate binding site.

The protein belongs to the MetA family.

It is found in the cytoplasm. The enzyme catalyses L-homoserine + acetyl-CoA = O-acetyl-L-homoserine + CoA. It functions in the pathway amino-acid biosynthesis; L-methionine biosynthesis via de novo pathway; O-acetyl-L-homoserine from L-homoserine: step 1/1. Transfers an acetyl group from acetyl-CoA to L-homoserine, forming acetyl-L-homoserine. The sequence is that of Homoserine O-acetyltransferase from Ruegeria pomeroyi (strain ATCC 700808 / DSM 15171 / DSS-3) (Silicibacter pomeroyi).